The following is a 358-amino-acid chain: MFDKLEDLIHHYEELMNLLSEPDVANDANRFKKLMKEQSDLAPIVETYKKYKECKQNIEDSLAILDEESDEEMRELAKEELKDSKEQVEELEKKLKILLLPKDPNDDKNVIVEIRAGAGGEEAALFAAEIYRMYVHYAENRGWKVETLDADETGIGGMKSVEFMVKGSGAYSILKYESGVHRVQRVPETESQGRIQTSTCSVAVMPEAEDVDVKIDDKDIRIDVMRASGNGGQCVNTTDSAVRLTHYPTGIVIYSQTEKSQIQNKEKAFALLRTKLYDMELQKKQDAEAEERRSQIGTGDRAEKIRTYNFPQGRVTDHRINLTLYKLDKILNGDIQEIIDACIAADQAKKLSNMEHDA.

Gln-233 carries the N5-methylglutamine modification.

The protein belongs to the prokaryotic/mitochondrial release factor family. In terms of processing, methylated by PrmC. Methylation increases the termination efficiency of RF1.

The protein resides in the cytoplasm. Peptide chain release factor 1 directs the termination of translation in response to the peptide chain termination codons UAG and UAA. This Agathobacter rectalis (strain ATCC 33656 / DSM 3377 / JCM 17463 / KCTC 5835 / VPI 0990) (Eubacterium rectale) protein is Peptide chain release factor 1.